We begin with the raw amino-acid sequence, 605 residues long: Phosphoenolpyruvate carboxykinase (ATP) (605 aa).

A compositionally biased stretch (low complexity) spans 27-48 (SGPSSSFINNNNSNNNNNKSSN). A disordered region spans residues 27 to 67 (SGPSSSFINNNNSNNNNNKSSNMFNHDHVNKTNLHPGGVKP). 307–314 (GLSGTGKT) provides a ligand contact to ATP.

It belongs to the phosphoenolpyruvate carboxykinase (ATP) family.

The enzyme catalyses oxaloacetate + ATP = phosphoenolpyruvate + ADP + CO2. The protein operates within carbohydrate biosynthesis; gluconeogenesis. In Neurospora crassa (strain ATCC 24698 / 74-OR23-1A / CBS 708.71 / DSM 1257 / FGSC 987), this protein is Phosphoenolpyruvate carboxykinase (ATP) (acu-6).